Here is a 213-residue protein sequence, read N- to C-terminus: Ribonuclease Oy (213 aa).

His-35 is an active-site residue. Cys-51 and Cys-96 are joined by a disulfide. Residue Asn-52 is glycosylated (N-linked (GlcNAc...) asparagine). Residues Glu-89 and His-93 contribute to the active site. N-linked (GlcNAc...) asparagine glycans are attached at residues Asn-121 and Asn-142. 2 disulfide bridges follow: Cys-160–Cys-198 and Cys-178–Cys-188.

It belongs to the RNase T2 family.

The protein localises to the secreted. Functionally, releases mononucleotides from RNA in the order of 3'-GMP, 3'-AMP and 3'-UMP. This is Ribonuclease Oy from Magallana gigas (Pacific oyster).